Reading from the N-terminus, the 397-residue chain is MTATDPVANLQTLIRCPSVTPAEGGALTALDAMLTPLGFTVDRVTAREEGTAAIENLYARLGRDGPHLMFAGHTDVVPVGDEAAWTHPPFAAEISNGELFGRGAVDMKGGIACFVAAVARHIEKSGPPAGSISFLVTGDEEGPAINGTIKLLQWAAERGERWDACLVGEPTNPDRLGDMIKIGRRGSLSGKITVHGVQGHAAYPHLADNPVRGLLQLTQALMDPPFDGGTDDFQPSNLEVTTVDVGNPATNVIPAKASASFNIRFNDSWTVETLRAEILRRLEAAAGNGQLRPGRPPAKYDIVWADRPSHVFLTRNNALIASLSSAIESVAGRSPALSTTGGTSDARFIKDYCPVVEFGLVGQTMHMVDERVAVADLETLTAIYQTFIDRWFAHAGS.

H73 provides a ligand contact to Zn(2+). D75 is an active-site residue. Residue D106 coordinates Zn(2+). The Proton acceptor role is filled by E140. Zn(2+) contacts are provided by E141, E169, and H366.

This sequence belongs to the peptidase M20A family. DapE subfamily. As to quaternary structure, homodimer. It depends on Zn(2+) as a cofactor. The cofactor is Co(2+).

It catalyses the reaction N-succinyl-(2S,6S)-2,6-diaminopimelate + H2O = (2S,6S)-2,6-diaminopimelate + succinate. It participates in amino-acid biosynthesis; L-lysine biosynthesis via DAP pathway; LL-2,6-diaminopimelate from (S)-tetrahydrodipicolinate (succinylase route): step 3/3. In terms of biological role, catalyzes the hydrolysis of N-succinyl-L,L-diaminopimelic acid (SDAP), forming succinate and LL-2,6-diaminopimelate (DAP), an intermediate involved in the bacterial biosynthesis of lysine and meso-diaminopimelic acid, an essential component of bacterial cell walls. The sequence is that of Succinyl-diaminopimelate desuccinylase from Rhizobium etli (strain ATCC 51251 / DSM 11541 / JCM 21823 / NBRC 15573 / CFN 42).